Here is a 264-residue protein sequence, read N- to C-terminus: MMESIKKLREMTGAGMMDVKKALADAEGNEDKAIALLRERGIAKAVKKGDREAKEGIVRFAVDGNRAAMVEVNSETDFVARNADFQATVEKLAQAALQAKTNDVEEFKNFTVDGETVGNMVAATAGKIGENIVLNRVAYLEGQQVAGYVHSNGKIGVLVDLAGGDEAKAKDVALHVAAERPQFLTRDEVESGDIEKEREILTNKALAEGKPQQIVEKIVEGQIGKFYQERVLPEQTFVKDNSLTVAKYLGDASVNKFVRFEIGA.

An involved in Mg(2+) ion dislocation from EF-Tu region spans residues Thr76–Val79.

Belongs to the EF-Ts family.

Its subcellular location is the cytoplasm. Its function is as follows. Associates with the EF-Tu.GDP complex and induces the exchange of GDP to GTP. It remains bound to the aminoacyl-tRNA.EF-Tu.GTP complex up to the GTP hydrolysis stage on the ribosome. The sequence is that of Elongation factor Ts from Deinococcus radiodurans (strain ATCC 13939 / DSM 20539 / JCM 16871 / CCUG 27074 / LMG 4051 / NBRC 15346 / NCIMB 9279 / VKM B-1422 / R1).